A 166-amino-acid polypeptide reads, in one-letter code: NAD(P)H-quinone oxidoreductase subunit I, chloroplastic (166 aa).

4Fe-4S ferredoxin-type domains are found at residues 55–84 (GRIHFEFDKCIACEVCVRVCPIDLPVVDWQ) and 95–124 (VNYSIDFGICIFCGNCVEYCPTNCLSMTEE). [4Fe-4S] cluster-binding residues include C64, C67, C70, C74, C104, C107, C110, and C114.

It belongs to the complex I 23 kDa subunit family. In terms of assembly, NDH is composed of at least 16 different subunits, 5 of which are encoded in the nucleus. Requires [4Fe-4S] cluster as cofactor.

The protein localises to the plastid. It localises to the chloroplast thylakoid membrane. It catalyses the reaction a plastoquinone + NADH + (n+1) H(+)(in) = a plastoquinol + NAD(+) + n H(+)(out). The catalysed reaction is a plastoquinone + NADPH + (n+1) H(+)(in) = a plastoquinol + NADP(+) + n H(+)(out). Its function is as follows. NDH shuttles electrons from NAD(P)H:plastoquinone, via FMN and iron-sulfur (Fe-S) centers, to quinones in the photosynthetic chain and possibly in a chloroplast respiratory chain. The immediate electron acceptor for the enzyme in this species is believed to be plastoquinone. Couples the redox reaction to proton translocation, and thus conserves the redox energy in a proton gradient. The protein is NAD(P)H-quinone oxidoreductase subunit I, chloroplastic of Coreopsis petrophiloides (Tickseed).